Reading from the N-terminus, the 463-residue chain is L-seryl-tRNA(Sec) selenium transferase (463 aa).

At lysine 294 the chain carries N6-(pyridoxal phosphate)lysine.

The protein belongs to the SelA family. Requires pyridoxal 5'-phosphate as cofactor.

It is found in the cytoplasm. It carries out the reaction L-seryl-tRNA(Sec) + selenophosphate + H(+) = L-selenocysteinyl-tRNA(Sec) + phosphate. The protein operates within aminoacyl-tRNA biosynthesis; selenocysteinyl-tRNA(Sec) biosynthesis; selenocysteinyl-tRNA(Sec) from L-seryl-tRNA(Sec) (bacterial route): step 1/1. Its function is as follows. Converts seryl-tRNA(Sec) to selenocysteinyl-tRNA(Sec) required for selenoprotein biosynthesis. The polypeptide is L-seryl-tRNA(Sec) selenium transferase (Hyphomonas neptunium (strain ATCC 15444)).